We begin with the raw amino-acid sequence, 130 residues long: Small ribosomal subunit protein uS8 (130 aa).

The protein belongs to the universal ribosomal protein uS8 family. As to quaternary structure, part of the 30S ribosomal subunit. Contacts proteins S5 and S12.

Functionally, one of the primary rRNA binding proteins, it binds directly to 16S rRNA central domain where it helps coordinate assembly of the platform of the 30S subunit. In Edwardsiella ictaluri (strain 93-146), this protein is Small ribosomal subunit protein uS8.